A 256-amino-acid chain; its full sequence is Triosephosphate isomerase (256 aa).

9–11 (NWK) contributes to the substrate binding site. His-97 serves as the catalytic Electrophile. Catalysis depends on Glu-169, which acts as the Proton acceptor. Substrate is bound by residues Gly-175, Ser-214, and 235-236 (GG).

This sequence belongs to the triosephosphate isomerase family. As to quaternary structure, homodimer.

Its subcellular location is the cytoplasm. It catalyses the reaction D-glyceraldehyde 3-phosphate = dihydroxyacetone phosphate. The protein operates within carbohydrate biosynthesis; gluconeogenesis. It participates in carbohydrate degradation; glycolysis; D-glyceraldehyde 3-phosphate from glycerone phosphate: step 1/1. Its function is as follows. Involved in the gluconeogenesis. Catalyzes stereospecifically the conversion of dihydroxyacetone phosphate (DHAP) to D-glyceraldehyde-3-phosphate (G3P). The chain is Triosephosphate isomerase from Moritella marina (Vibrio marinus).